The primary structure comprises 219 residues: Probable nicotinate-nucleotide adenylyltransferase (219 aa).

This sequence belongs to the NadD family.

The enzyme catalyses nicotinate beta-D-ribonucleotide + ATP + H(+) = deamido-NAD(+) + diphosphate. It functions in the pathway cofactor biosynthesis; NAD(+) biosynthesis; deamido-NAD(+) from nicotinate D-ribonucleotide: step 1/1. In terms of biological role, catalyzes the reversible adenylation of nicotinate mononucleotide (NaMN) to nicotinic acid adenine dinucleotide (NaAD). The protein is Probable nicotinate-nucleotide adenylyltransferase of Herminiimonas arsenicoxydans.